We begin with the raw amino-acid sequence, 139 residues long: Holo-[acyl-carrier-protein] synthase (139 aa).

Mg(2+)-binding residues include aspartate 8 and glutamate 57.

Belongs to the P-Pant transferase superfamily. AcpS family. Requires Mg(2+) as cofactor.

It localises to the cytoplasm. It carries out the reaction apo-[ACP] + CoA = holo-[ACP] + adenosine 3',5'-bisphosphate + H(+). Transfers the 4'-phosphopantetheine moiety from coenzyme A to a Ser of acyl-carrier-protein. The chain is Holo-[acyl-carrier-protein] synthase from Rhizobium meliloti (strain 1021) (Ensifer meliloti).